A 363-amino-acid polypeptide reads, in one-letter code: 3-isopropylmalate dehydrogenase (363 aa).

NAD(+) is bound at residue 77 to 90 (GPKWQHLPPDQQPE). Positions 98, 108, 137, and 226 each coordinate substrate. The Mg(2+) site is built by Asp226, Asp250, and Asp254. 284–296 (GSAPDIAGKNIAN) contributes to the NAD(+) binding site.

This sequence belongs to the isocitrate and isopropylmalate dehydrogenases family. LeuB type 1 subfamily. As to quaternary structure, homodimer. It depends on Mg(2+) as a cofactor. Mn(2+) is required as a cofactor.

Its subcellular location is the cytoplasm. It catalyses the reaction (2R,3S)-3-isopropylmalate + NAD(+) = 4-methyl-2-oxopentanoate + CO2 + NADH. It participates in amino-acid biosynthesis; L-leucine biosynthesis; L-leucine from 3-methyl-2-oxobutanoate: step 3/4. Catalyzes the oxidation of 3-carboxy-2-hydroxy-4-methylpentanoate (3-isopropylmalate) to 3-carboxy-4-methyl-2-oxopentanoate. The product decarboxylates to 4-methyl-2 oxopentanoate. The sequence is that of 3-isopropylmalate dehydrogenase from Buchnera aphidicola subsp. Pemphigus spyrothecae.